The chain runs to 182 residues: Sec-independent protein translocase protein TatB (182 aa).

Residues 1-21 (MFDIGFSELLLVFVIGLIVLG) traverse the membrane as a helical segment. 2 disordered regions span residues 87–107 (QAAE…ASDE) and 121–182 (TQHE…SDKP). A compositionally biased stretch (low complexity) spans 168–182 (AAPVVESSPSSSDKP).

It belongs to the TatB family. The Tat system comprises two distinct complexes: a TatABC complex, containing multiple copies of TatA, TatB and TatC subunits, and a separate TatA complex, containing only TatA subunits. Substrates initially bind to the TatABC complex, which probably triggers association of the separate TatA complex to form the active translocon.

The protein localises to the cell inner membrane. Functionally, part of the twin-arginine translocation (Tat) system that transports large folded proteins containing a characteristic twin-arginine motif in their signal peptide across membranes. Together with TatC, TatB is part of a receptor directly interacting with Tat signal peptides. TatB may form an oligomeric binding site that transiently accommodates folded Tat precursor proteins before their translocation. The protein is Sec-independent protein translocase protein TatB of Salmonella choleraesuis (strain SC-B67).